The following is a 433-amino-acid chain: Ligand-dependent corepressor (433 aa).

The disordered stretch occupies residues 1-147 (MQRMIQQFAA…GTREGFGHST (147 aa)). The span at 13–34 (TSKTSSTQDPSQPNSTKNQSLP) shows a compositional bias: polar residues. The span at 36–48 (ASPVTTSPTAATT) shows a compositional bias: low complexity. A Phosphoserine modification is found at Ser42. Residues 53–57 (LSKLL) carry the Interaction with nuclear receptors motif. Phosphoserine is present on Ser63. The segment covering 88–110 (KKSPCASSTSLSHSPGCSSTQGN) has biased composition (polar residues). Ser249 is modified (phosphoserine). A Glycyl lysine isopeptide (Lys-Gly) (interchain with G-Cter in SUMO2) cross-link involves residue Lys254. The tract at residues 299–348 (QNRKSMLDAGPDSWGSDAEQSTSGQPYPTSDQEGDPGSKQPRKKRGRYRQ) is disordered. Over residues 316–329 (AEQSTSGQPYPTSD) the composition is skewed to polar residues. A Nuclear localization signal motif is present at residues 339–345 (PRKKRGR). Positions 340–392 (RKKRGRYRQYNSEILEEAISVVMSGKMSVSKAQSIYGIPHSTLEYKVKERLGT) constitute an HTH psq-type domain. A DNA-binding region (H-T-H motif) is located at residues 368–388 (VSKAQSIYGIPHSTLEYKVKE). The disordered stretch occupies residues 393-412 (LKNPPKKKMKLMRSEGPDVS). Lys414 participates in a covalent cross-link: Glycyl lysine isopeptide (Lys-Gly) (interchain with G-Cter in SUMO2).

In terms of assembly, interacts with ESR1 and ESR2 in the presence of estradiol. Interacts with CTBP1, HDAC3 and HDAC6. Component of a large corepressor complex that contains about 20 proteins, including CTBP1, CTBP2, HDAC1 and HDAC2. Detected in heart and kidney.

Its subcellular location is the nucleus. Its function is as follows. Repressor of ligand-dependent transcription activation by various nuclear repressors. Repressor of ligand-dependent transcription activation by ESR1, ESR2, NR3C1, PGR, RARA, RARB, RARG, RXRA and VDR. May act as transcription activator that binds DNA elements with the sequence 5'-CCCTATCGATCGATCTCTACCT-3'. The protein is Ligand-dependent corepressor (Lcor) of Mus musculus (Mouse).